Here is a 327-residue protein sequence, read N- to C-terminus: Endochitinase CH5B (327 aa).

Residues 1 to 26 form the signal peptide; sequence MKKNRMMIMICSVGVVWMLLVGGSYG. The Chitin-binding type-1 domain occupies 27–67; it reads EQCGRQAGGALCPGGNCCSQFGWCGSTTDYCGKDCQSQCGG. 7 disulfides stabilise this stretch: Cys29–Cys44, Cys38–Cys50, Cys43–Cys57, Cys61–Cys65, Cys96–Cys158, Cys169–Cys177, and Cys276–Cys308. The Proton donor role is filled by Glu140. The propeptide at 317–327 is removed in mature form; sequence SLFLSDLVTSQ.

It belongs to the glycosyl hydrolase 19 family. Chitinase class I subfamily.

The protein resides in the vacuole. The enzyme catalyses Random endo-hydrolysis of N-acetyl-beta-D-glucosaminide (1-&gt;4)-beta-linkages in chitin and chitodextrins.. Its function is as follows. Defense against chitin-containing fungal pathogens. The protein is Endochitinase CH5B of Phaseolus vulgaris (Kidney bean).